We begin with the raw amino-acid sequence, 438 residues long: Xylose isomerase (438 aa).

Residues H102 and D105 contribute to the active site. Residues E233, E269, H272, D297, D308, D310, and D340 each contribute to the Mg(2+) site.

The protein belongs to the xylose isomerase family. As to quaternary structure, homotetramer. Mg(2+) is required as a cofactor.

It is found in the cytoplasm. It carries out the reaction alpha-D-xylose = alpha-D-xylulofuranose. The chain is Xylose isomerase from Solibacter usitatus (strain Ellin6076).